The sequence spans 803 residues: H(+)/Cl(-) exchange transporter 7 (803 aa).

The tract at residues 1-46 (MANVSKKVSWSGRDRDDEEGAPLLRRTGQPDEETPLLNGAGPGARQ) is disordered. At 1–124 (MANVSKKVSW…TAFRTVEIKR (124 aa)) the chain is on the cytoplasmic side. Ser9 bears the Phosphoserine mark. Helical transmembrane passes span 125-157 (WVIC…YRVI) and 172-195 (FSLL…VAFI). Positions 201–205 (GSGIP) match the Selectivity filter part_1 motif. Ser202 contributes to the chloride binding site. Residues 204–211 (IPQIKCFL) constitute an intramembrane region (helical). Transmembrane regions (helical) follow at residues 221 to 239 (RLKT…VVGG) and 245 to 262 (EGPM…ISQG). A Selectivity filter part_2 motif is present at residues 243–247 (GKEGP). 2 intramembrane regions (helical) span residues 286–298 (FVSA…VSAA) and 302–310 (PVGGVLFSL). 5 helical membrane-spanning segments follow: residues 320-339 (FLTW…LNFV), 373-403 (IPVF…FRIR), 408-430 (PCLQ…FVLI), 485-505 (PMTL…TYGL), and 510-533 (GVFI…MSYL). The Selectivity filter part_3 motif lies at 510–514 (GVFIP). Phe512 is a chloride binding site. Residues 543–557 (GKYALMGAAAQLGGI) constitute an intramembrane region (helical). Positions 558–560 (VRM) form an intramembrane region, note=Loop between two helices. An intramembrane region (helical) is located at residues 561–572 (TLSLTVIMMEAT). The segment at residues 573-576 (SNVT) is an intramembrane region (note=Loop between two helices). Residues 577–595 (YGFPIMLVLMTAKIVGDVF) form a helical membrane-spanning segment. At 596-803 (IEGLYDMHIQ…GLEELSLAQT (208 aa)) the chain is on the cytoplasmic side. Tyr600 lines the chloride pocket. CBS domains follow at residues 629-693 (MSTP…VFVE) and 739-797 (MNPS…GLEE). ATP-binding positions include 656 to 658 (HNG) and 781 to 784 (TRKD). Ser799 bears the Phosphoserine mark.

Belongs to the chloride channel (TC 2.A.49) family. ClC-7/CLCN7 subfamily. As to quaternary structure, chloride channel 7 are heteromers of alpha (CLCN7) and beta (OSTM1) subunits. Brain, testis, muscle and kidney.

The protein localises to the lysosome membrane. It catalyses the reaction 2 chloride(in) + H(+)(out) = 2 chloride(out) + H(+)(in). In terms of biological role, slowly voltage-gated channel mediating the exchange of chloride ions against protons. Functions as antiporter and contributes to the acidification of the lysosome lumen and may be involved in maintaining lysosomal pH. The CLC channel family contains both chloride channels and proton-coupled anion transporters that exchange chloride or another anion for protons. The presence of conserved gating glutamate residues is typical for family members that function as antiporters. The sequence is that of H(+)/Cl(-) exchange transporter 7 (Clcn7) from Rattus norvegicus (Rat).